We begin with the raw amino-acid sequence, 264 residues long: tRNA (guanine-N(1)-)-methyltransferase (264 aa).

Residues glycine 125 and 145–150 each bind S-adenosyl-L-methionine; that span reads LGDFVL.

Belongs to the RNA methyltransferase TrmD family. As to quaternary structure, homodimer.

It is found in the cytoplasm. The enzyme catalyses guanosine(37) in tRNA + S-adenosyl-L-methionine = N(1)-methylguanosine(37) in tRNA + S-adenosyl-L-homocysteine + H(+). Functionally, specifically methylates guanosine-37 in various tRNAs. This Burkholderia cenocepacia (strain HI2424) protein is tRNA (guanine-N(1)-)-methyltransferase.